Reading from the N-terminus, the 195-residue chain is dITP/XTP pyrophosphatase (195 aa).

Residue 7-12 (SSNKGK) coordinates substrate. E38 and D68 together coordinate Mg(2+). D68 functions as the Proton acceptor in the catalytic mechanism. Substrate-binding positions include S69, 150 to 153 (FGYD), K173, and 178 to 179 (HR).

Belongs to the HAM1 NTPase family. As to quaternary structure, homodimer. It depends on Mg(2+) as a cofactor.

The enzyme catalyses XTP + H2O = XMP + diphosphate + H(+). The catalysed reaction is dITP + H2O = dIMP + diphosphate + H(+). It catalyses the reaction ITP + H2O = IMP + diphosphate + H(+). Pyrophosphatase that catalyzes the hydrolysis of nucleoside triphosphates to their monophosphate derivatives, with a high preference for the non-canonical purine nucleotides XTP (xanthosine triphosphate), dITP (deoxyinosine triphosphate) and ITP. Seems to function as a house-cleaning enzyme that removes non-canonical purine nucleotides from the nucleotide pool, thus preventing their incorporation into DNA/RNA and avoiding chromosomal lesions. This is dITP/XTP pyrophosphatase from Nautilia profundicola (strain ATCC BAA-1463 / DSM 18972 / AmH).